The sequence spans 688 residues: Sialic acid-binding Ig-like lectin 10 (688 aa).

The N-terminal stretch at 1 to 17 is a signal peptide; that stretch reads MSLLLFLLSFLLDGPQG. Topologically, residues 18–543 are extracellular; that stretch reads QMESYFLQVQ…DKDSATAFSK (526 aa). The Ig-like V-type domain maps to 26–138; that stretch reads VQRIVKAQEG…SFKEEFRLQV (113 aa). Intrachain disulfides connect Cys-37–Cys-172, Cys-42–Cys-102, and Cys-163–Cys-214. Arg-120 is an N-acetylneuraminate binding site. Residues 145-228 enclose the Ig-like C2-type 1 domain; sequence PDIFIPEVLE…SRMSTQRTVR (84 aa). N-linked (GlcNAc...) asparagine glycans are attached at residues Asn-195 and Asn-246. 2 consecutive Ig-like C2-type domains span residues 250 to 334 and 339 to 436; these read PDLH…LDLS and PQDL…LSLS. 2 disulfide bridges follow: Cys-271–Cys-318 and Cys-375–Cys-420. The chain crosses the membrane as a helical span at residues 544–564; sequence GAVLGFGITALLALCLIVVIV. Residues 565 to 688 lie on the Cytoplasmic side of the membrane; it reads KTLQKKGTQE…YSDYTEVRVH (124 aa). Positions 588–593 match the ITIM motif 1 motif; sequence LDYINV. The tract at residues 602 to 656 is disordered; the sequence is RNWKAEPDAPSRSSPLDTHFPKPKKKQKDPHFTYPGCPDPTSSSQVPVSENNPEE. The span at 641–652 shows a compositional bias: polar residues; the sequence is PTSSSQVPVSEN. An ITIM motif 2 motif is present at residues 657-662; that stretch reads LHYAAL. The residue at position 659 (Tyr-659) is a Phosphotyrosine.

The protein belongs to the immunoglobulin superfamily. SIGLEC (sialic acid binding Ig-like lectin) family. Interacts with PTPN6/SHP-1 upon phosphorylation. Interacts with NCF1. Interacts with CD24; the probable CD24:SIGLEC10 complex is proposed to inhibit HGMB1-mediated tissue damage immune response. Interacts with HMGB1; the interaction is dependent on CD24. Associates with membrane IgM on the B cell surface. Interacts with RIGI, CBL and PTPN11. Phosphorylation of Tyr-659 is involved in binding to PTPN6. As to expression, expressed in B cells with high levels in pre-B cells and B1a cells of the peritoneal cavity.

It is found in the cell membrane. Putative adhesion molecule that mediates sialic-acid dependent binding to cells. Preferentially binds to alpha-2,3- or alpha-2,6-linked sialic acid. The sialic acid recognition site may be masked by cis interactions with sialic acids on the same cell surface. In the immune response, seems to act as an inhibitory receptor upon ligand induced tyrosine phosphorylation by recruiting cytoplasmic phosphatase(s) via their SH2 domain(s) that block signal transduction through dephosphorylation of signaling molecules. Involved in negative regulation of B-cell antigen receptor signaling and specifically acts on B1 cells to inhibit Ca(2+) signaling, cellular expansion and antibody secretion. The inhibition of B cell activation is dependent on PTPN6/SHP-1. In association with CD24 may be involved in the selective suppression of the immune response to danger-associated molecular patterns (DAMPs) such as HMGB1, HSP70 and HSP90. In association with CD24 may regulate the immune repsonse of natural killer (NK) cells. Plays a role in the control of autoimmunity. During initiation of adaptive immune responses by CD8-alpha(+) dendritic cells inhibits cross-presentation by impairing the formation of MHC class I-peptide complexes. The function seems to implicate recruitment of PTPN6/SHP-1, which dephosphorylates NCF1 of the NADPH oxidase complex consequently promoting phagosomal acidification. In terms of biological role, (Microbial infection) During infection by RNA viruses inhibits RIG-I signaling in macrophages by promoting its CBL-dependent ubiquitination and degradation via PTPN11/SHP-2. The protein is Sialic acid-binding Ig-like lectin 10 (Siglec10) of Mus musculus (Mouse).